A 296-amino-acid polypeptide reads, in one-letter code: Nitrogenase iron protein (296 aa).

Residue 11–18 (GKGGIGKS) coordinates ATP. C99 is a [4Fe-4S] cluster binding site. R102 carries the ADP-ribosylarginine; by dinitrogenase reductase ADP-ribosyltransferase modification. C134 serves as a coordination point for [4Fe-4S] cluster.

It belongs to the NifH/BchL/ChlL family. In terms of assembly, homodimer. [4Fe-4S] cluster serves as cofactor. In terms of processing, the reversible ADP-ribosylation of Arg-102 inactivates the nitrogenase reductase and regulates nitrogenase activity.

The catalysed reaction is N2 + 8 reduced [2Fe-2S]-[ferredoxin] + 16 ATP + 16 H2O = H2 + 8 oxidized [2Fe-2S]-[ferredoxin] + 2 NH4(+) + 16 ADP + 16 phosphate + 6 H(+). In terms of biological role, the key enzymatic reactions in nitrogen fixation are catalyzed by the nitrogenase complex, which has 2 components: the iron protein and the molybdenum-iron protein. The polypeptide is Nitrogenase iron protein (Dechloromonas aromatica (strain RCB)).